Reading from the N-terminus, the 222-residue chain is Pectate lyase A (222 aa).

Positions 1–25 (MKKMLTLLLSAGLVASIFGVMPAAA) are cleaved as a signal peptide.

It belongs to the polysaccharide lyase 3 family. Ca(2+) serves as cofactor.

The protein resides in the secreted. It catalyses the reaction Eliminative cleavage of (1-&gt;4)-alpha-D-galacturonan to give oligosaccharides with 4-deoxy-alpha-D-galact-4-enuronosyl groups at their non-reducing ends.. It carries out the reaction Eliminative cleavage of (1-&gt;4)-alpha-D-galacturonan methyl ester to give oligosaccharides with 4-deoxy-6-O-methyl-alpha-D-galact-4-enuronosyl groups at their non-reducing ends.. It functions in the pathway glycan metabolism; pectin degradation; 2-dehydro-3-deoxy-D-gluconate from pectin: step 2/5. With respect to regulation, strongly inhibited by Ba(2+). To a lesser extent, is also inhibited by Sn(2+), Mg(2+) and Ag(+). Inhibited by EDTA in vitro. In terms of biological role, catalyzes the depolymerization of both polygalacturonate and pectins of methyl esterification degree from 22 to 89%, with an endo mode of action. In contrast to the majority of pectate lyases, displays high activity on highly methylated pectins. Is not able to cleave trigalacturonate. Does not degrade xylans and carboxymethylcellulose (CMC). This is Pectate lyase A (pelA) from Paenibacillus barcinonensis.